A 196-amino-acid polypeptide reads, in one-letter code: ATP-dependent Clp protease proteolytic subunit (196 aa).

The active-site Nucleophile is S98. The active site involves H123.

It belongs to the peptidase S14 family. In terms of assembly, fourteen ClpP subunits assemble into 2 heptameric rings which stack back to back to give a disk-like structure with a central cavity, resembling the structure of eukaryotic proteasomes.

The protein resides in the cytoplasm. The enzyme catalyses Hydrolysis of proteins to small peptides in the presence of ATP and magnesium. alpha-casein is the usual test substrate. In the absence of ATP, only oligopeptides shorter than five residues are hydrolyzed (such as succinyl-Leu-Tyr-|-NHMec, and Leu-Tyr-Leu-|-Tyr-Trp, in which cleavage of the -Tyr-|-Leu- and -Tyr-|-Trp bonds also occurs).. Cleaves peptides in various proteins in a process that requires ATP hydrolysis. Has a chymotrypsin-like activity. Plays a major role in the degradation of misfolded proteins. This is ATP-dependent Clp protease proteolytic subunit from Actinobacillus pleuropneumoniae serotype 5b (strain L20).